Here is a 759-residue protein sequence, read N- to C-terminus: LON peptidase N-terminal domain and RING finger protein 3 (759 aa).

The segment at 1–69 (MESVRIEQML…PGTSTPESKV (69 aa)) is disordered. Over residues 57–66 (EQSPGTSTPE) the composition is skewed to polar residues. The stretch at 67–100 (SKVLLTQADALASRGRIREALEVYRQLSERQQLV) is one TPR 1 repeat. The RING-type 1 zinc finger occupies 158-196 (CRKCHGFLSDPVSLSCGHTFCKLCLERGRAADRRCALCG). TPR repeat units lie at residues 243 to 276 (ASQLRHEGNRLYRERQVEAALLKYNEAVKLAPND), 278 to 310 (LLYSNRSQIYFTLESHENALHDAEIACKLRPMG), and 312 to 344 (KAHFRKAQALATLGKVEEALREFLYCVSLDGKN). The disordered stretch occupies residues 360-454 (HCSSQEEAAA…TDQGDKPALS (95 aa)). The segment covering 380–393 (AKVKGDGQQHHMKD) has biased composition (basic and acidic residues). The RING-type 2 zinc-finger motif lies at 467 to 505 (CALCMRLFYEPVTTPCGHTFCLKCLERCLDHNAKCPLCK). Positions 546 to 755 (MEELSNLNKN…GIRRVLAFIS (210 aa)) constitute a Lon N-terminal domain.

The chain is LON peptidase N-terminal domain and RING finger protein 3 (LONRF3) from Homo sapiens (Human).